A 336-amino-acid polypeptide reads, in one-letter code: MTEAQTACATTETPVAAPAAPRWRVADVIALYELPFNDLLFRAQQTHREHFDANAIQLSTLLSIKTGGCEEDCGYCSQSAHHDTGLKAEKLMEVDAVLAAARTAKENGATRFCMGAAWRNPKDRHIEPIKEMIRGVKDMGLETCVTLGMLEEHQAKALAEAGLDYYNHNLDTSPEFYGQIISTRTYQDRLDTLERVRDAGINVCCGGIIGMGESRRERAGLIAQLANMNPYPESVPINNLVAIEGTPLANAQALDPFEFVRTIAVARITMPKAMVRLSAGREQLDDAMQALCFLAGANSMFYGDVLLTTGNPRAEADRKLLARLGMWASEASQLSA.

One can recognise a Radical SAM core domain in the interval 54 to 281; sequence NAIQLSTLLS…KAMVRLSAGR (228 aa). [4Fe-4S] cluster contacts are provided by cysteine 69, cysteine 73, and cysteine 76. Positions 113, 144, 204, and 276 each coordinate [2Fe-2S] cluster.

The protein belongs to the radical SAM superfamily. Biotin synthase family. In terms of assembly, homodimer. The cofactor is [4Fe-4S] cluster. [2Fe-2S] cluster serves as cofactor.

It catalyses the reaction (4R,5S)-dethiobiotin + (sulfur carrier)-SH + 2 reduced [2Fe-2S]-[ferredoxin] + 2 S-adenosyl-L-methionine = (sulfur carrier)-H + biotin + 2 5'-deoxyadenosine + 2 L-methionine + 2 oxidized [2Fe-2S]-[ferredoxin]. It participates in cofactor biosynthesis; biotin biosynthesis; biotin from 7,8-diaminononanoate: step 2/2. Functionally, catalyzes the conversion of dethiobiotin (DTB) to biotin by the insertion of a sulfur atom into dethiobiotin via a radical-based mechanism. This Burkholderia pseudomallei (strain 1710b) protein is Biotin synthase.